The chain runs to 70 residues: Large ribosomal subunit protein bL31 (70 aa).

C16, C18, C37, and C40 together coordinate Zn(2+). The disordered stretch occupies residues 48–70 (QRQASSGGRVDKFNKRFGALGSK).

It belongs to the bacterial ribosomal protein bL31 family. Type A subfamily. As to quaternary structure, part of the 50S ribosomal subunit. The cofactor is Zn(2+).

Its function is as follows. Binds the 23S rRNA. This Photobacterium profundum (strain SS9) protein is Large ribosomal subunit protein bL31.